The primary structure comprises 231 residues: MSSCMLFFTVIIAGVFMGTIATNYCNLKSCVNYGNIHTMCKYTSSTPASTCSKWEKAGLTDAEKKTIVTLHNQLRRKVAAGKETRGNPGPQPAAATMPDLTWDNELAMVAQRWANQCKYGHDACRNIERFQVGQNVAIRGSTGENLSTVDQMILSWYSEVDLMNKKYVSSFPKDDTYKKIGHYTQIVYGNTKTIGCGRIFYKDGKWNQQYLVCNYGPAGNYPNAPVYQIKQ.

The signal sequence occupies residues 1–21 (MSSCMLFFTVIIAGVFMGTIA). Cystine bridges form between Cys25/Cys40, Cys30/Cys124, and Cys51/Cys117. Positions 68–215 (VTLHNQLRRK…WNQQYLVCNY (148 aa)) constitute an SCP domain. Asn145 is a glycosylation site (N-linked (GlcNAc...) asparagine). Cys196 and Cys213 are joined by a disulfide.

This sequence belongs to the CRISP family. Expressed by the venom gland.

It is found in the secreted. The chain is Venom allergen 3 homolog from Dinoponera quadriceps (South American ant).